The primary structure comprises 327 residues: MSFVANPKIDPKSLGKVGVLYGGRSAEREISLMSGSGVLAALQSRGVDAHGFDPATQSVAELAAAGFDRVFIALHGRYGEDGTMQGLLEQLGVPYTGSGVLASALAMDKQATKRLWMTHDLSTPRFAMLYADTDFDAVVADLGLPLIVKPAREGSSIGLSKVTDASQMREAFEKAAALDNDVIAETFIDGAELTCPLVGEGATAEALPVIRIVAPDSNYDYQNKYFTDDTQYLCPSGLSAEVEREVQQLAVQAYRVLGCRGWARADVMLRADGKPFLLEMNTSPGMTGHSLVPMAARAAGISYEDFVMQVVAAATLDLHPNEHWKPE.

Residues Lys113–Ala312 form the ATP-grasp domain. Val139 to Thr194 is an ATP binding site. Asp266, Glu279, and Asn281 together coordinate Mg(2+).

It belongs to the D-alanine--D-alanine ligase family. Mg(2+) is required as a cofactor. Requires Mn(2+) as cofactor.

It localises to the cytoplasm. The catalysed reaction is 2 D-alanine + ATP = D-alanyl-D-alanine + ADP + phosphate + H(+). Its pathway is cell wall biogenesis; peptidoglycan biosynthesis. Cell wall formation. The protein is D-alanine--D-alanine ligase of Cupriavidus pinatubonensis (strain JMP 134 / LMG 1197) (Cupriavidus necator (strain JMP 134)).